The primary structure comprises 100 residues: MQADIPTLTRADITDMLYHEVGLSRADSAKMIEQMLGHITDALKKGENVKISGFGSFILRDKNERVGRNPKTGIEVPIAPRRVLTFRASQLMRQRIIKGA.

This sequence belongs to the bacterial histone-like protein family. As to quaternary structure, heterodimer of an alpha and a beta chain.

This protein is one of the two subunits of integration host factor, a specific DNA-binding protein that functions in genetic recombination as well as in transcriptional and translational control. In Zymomonas mobilis subsp. mobilis (strain ATCC 31821 / ZM4 / CP4), this protein is Integration host factor subunit alpha (ihfA).